The following is a 159-amino-acid chain: UPF0336 protein MAP_4107 (159 aa).

It belongs to the UPF0336 family.

The sequence is that of UPF0336 protein MAP_4107 from Mycolicibacterium paratuberculosis (strain ATCC BAA-968 / K-10) (Mycobacterium paratuberculosis).